The following is a 210-amino-acid chain: Cell wall protein SRL1 (210 aa).

Residues 1–19 (MLQSVVFFALLTFASSVSA) form the signal peptide. A glycan (N-linked (GlcNAc...) asparagine) is linked at asparagine 23. 2 disordered regions span residues 80-99 (SLSTSSASGSVTPESTHEIT) and 118-142 (LSPSSTAASVSDEDSNNKDAKVKSF). The segment covering 118–127 (LSPSSTAASV) has biased composition (low complexity). A compositionally biased stretch (basic and acidic residues) spans 132–141 (SNNKDAKVKS). 3 N-linked (GlcNAc...) asparagine glycosylation sites follow: asparagine 174, asparagine 200, and asparagine 206.

Its subcellular location is the secreted. The protein resides in the cell wall. It localises to the cell surface. In terms of biological role, required to stabilize the cell wall in the absence of multiple GPI-anchored mannoproteins. In Saccharomyces cerevisiae (strain ATCC 204508 / S288c) (Baker's yeast), this protein is Cell wall protein SRL1 (SRL1).